Here is a 165-residue protein sequence, read N- to C-terminus: MKSIYITGYMGAGKTTIGKALSKELHMDVIDTDQKIEEKQEKEIRDIFAEEGEMAFREYESEMLRSLPVENVIITTGGGIIEREENRKWMKENGTVVYLYCDPHVIAERLREDTTRPLFQKKDIDAFVMKFELRRAYYEEAHIHIDTTNKSVKQIMDELKEKINE.

An ATP-binding site is contributed by 11 to 16 (GAGKTT). Residue Thr15 participates in Mg(2+) binding. Residues Asp33, Arg57, and Gly78 each coordinate substrate. An ATP-binding site is contributed by Arg116. Position 134 (Arg134) interacts with substrate.

The protein belongs to the shikimate kinase family. As to quaternary structure, monomer. Mg(2+) is required as a cofactor.

The protein resides in the cytoplasm. It catalyses the reaction shikimate + ATP = 3-phosphoshikimate + ADP + H(+). It participates in metabolic intermediate biosynthesis; chorismate biosynthesis; chorismate from D-erythrose 4-phosphate and phosphoenolpyruvate: step 5/7. Its function is as follows. Catalyzes the specific phosphorylation of the 3-hydroxyl group of shikimic acid using ATP as a cosubstrate. The protein is Shikimate kinase of Bacillus cereus (strain AH187).